The following is a 258-amino-acid chain: Ribonuclease HII (258 aa).

Positions 1–20 (MRVAPSGGPPHHHAMIRATP) are disordered. Over residues 10-20 (PHHHAMIRATP) the composition is skewed to basic residues. An RNase H type-2 domain is found at 48 to 236 (WPVAGCDEVG…VVAARERHRA (189 aa)). Positions 54, 55, and 145 each coordinate a divalent metal cation.

This sequence belongs to the RNase HII family. The cofactor is Mn(2+). It depends on Mg(2+) as a cofactor.

It is found in the cytoplasm. The catalysed reaction is Endonucleolytic cleavage to 5'-phosphomonoester.. Endonuclease that specifically degrades the RNA of RNA-DNA hybrids. This Nitrobacter winogradskyi (strain ATCC 25391 / DSM 10237 / CIP 104748 / NCIMB 11846 / Nb-255) protein is Ribonuclease HII.